A 118-amino-acid chain; its full sequence is Cobalt transport protein CbiN (118 aa).

2 consecutive transmembrane segments (helical) span residues 7–27 (INAL…VLGL) and 70–90 (SALF…YFGL). The interval 99–118 (ERASAASGAAAAPGDAPEGD) is disordered. A compositionally biased stretch (low complexity) spans 102–118 (SAASGAAAAPGDAPEGD).

Belongs to the CbiN family. As to quaternary structure, forms an energy-coupling factor (ECF) transporter complex composed of an ATP-binding protein (A component, CbiO), a transmembrane protein (T component, CbiQ) and 2 possible substrate-capture proteins (S components, CbiM and CbiN) of unknown stoichimetry.

The protein resides in the cell membrane. The protein operates within cofactor biosynthesis; adenosylcobalamin biosynthesis. Part of the energy-coupling factor (ECF) transporter complex CbiMNOQ involved in cobalt import. In Streptomyces coelicolor (strain ATCC BAA-471 / A3(2) / M145), this protein is Cobalt transport protein CbiN.